Reading from the N-terminus, the 131-residue chain is MTSDPIADMLTRVRNAIQARHPKVDVPASKLKAEIARILKEEGYITNFKVAEEGAKKTIKIYLKYANNNSPVISAIERVSRPGCRVYVGQTDIPRVLGGMGINILTTPRGVMTGRDAHKEHLGGEILCRVW.

Belongs to the universal ribosomal protein uS8 family. Part of the 30S ribosomal subunit. Contacts proteins S5 and S12.

In terms of biological role, one of the primary rRNA binding proteins, it binds directly to 16S rRNA central domain where it helps coordinate assembly of the platform of the 30S subunit. This is Small ribosomal subunit protein uS8 from Solibacter usitatus (strain Ellin6076).